Consider the following 389-residue polypeptide: Leucine aminopeptidase 1 (389 aa).

The signal sequence occupies residues 1 to 19 (MKLPALLTLGVAASTMVLA). Positions 20 to 88 (AIAPDQVPLN…LPKVFPTPAV (69 aa)) are excised as a propeptide. 5 N-linked (GlcNAc...) asparagine glycosylation sites follow: Asn-96, Asn-119, Asn-149, Asn-164, and Asn-181. Zn(2+)-binding residues include His-189 and Asp-208. An N-linked (GlcNAc...) asparagine glycan is attached at Asn-233. 2 residues coordinate Zn(2+): Glu-247 and Asp-274. An intrachain disulfide couples Cys-323 to Cys-327. His-356 provides a ligand contact to Zn(2+).

Belongs to the peptidase M28 family. M28E subfamily. In terms of assembly, monomer. Requires Zn(2+) as cofactor.

It is found in the secreted. Extracellular aminopeptidase that allows assimilation of proteinaceous substrates. In Paracoccidioides brasiliensis (strain Pb18), this protein is Leucine aminopeptidase 1 (LAP1).